A 185-amino-acid polypeptide reads, in one-letter code: Neuronal vesicle trafficking-associated protein 1 (185 aa).

The Cytoplasmic portion of the chain corresponds to 1–82 (MVKLGNNFAE…ITEGVTERFK (82 aa)). The helical; Signal-anchor for type II membrane protein transmembrane segment at 83-103 (VSVLVLFALAFLTCVVFLVVY) threads the bilayer. Over 104 to 185 (KVYKYDRACP…QETEAAEKSA (82 aa)) the chain is Lumenal. Residues 129 to 164 (ESYYTEQDSSAREKFYTVINHYNLAKQSITRSVSPW) form a required for GRIP1 interaction region.

This sequence belongs to the NSG family. As to quaternary structure, forms a complex with GRIP1, GRIA2 and STX12; controls the intracellular fate of AMPAR and the endosomal sorting of the GRIA2 subunit toward recycling and membrane targeting. Interacts with GRIP1. Interacts with STX12. Interacts with APP; could regulate APP processing. Interacts with FAM171A1. Widely expressed in brain and spinal cord. Expressed in neurons during maturation and synapse formation.

Its subcellular location is the membrane. It is found in the golgi apparatus. It localises to the trans-Golgi network membrane. The protein resides in the endosome membrane. The protein localises to the cell projection. Its subcellular location is the dendrite. It is found in the early endosome membrane. It localises to the late endosome membrane. The protein resides in the lysosome lumen. The protein localises to the recycling endosome membrane. Its subcellular location is the cytoplasmic vesicle membrane. It is found in the golgi stack membrane. It localises to the endosome. The protein resides in the multivesicular body membrane. The protein localises to the endoplasmic reticulum membrane. Plays a role in the recycling mechanism in neurons of multiple receptors, including AMPAR, APP and L1CAM and acts at the level of early endosomes to promote sorting of receptors toward a recycling pathway. Regulates sorting and recycling of GRIA2 through interaction with GRIP1 and then contributes to the regulation of synaptic transmission and plasticity by affecting the recycling and targeting of AMPA receptors to the synapse. Is required for faithful sorting of L1CAM to axons by facilitating trafficking from somatodendritic early endosome or the recycling endosome. In an other hand, induces apoptosis via the activation of CASP3 in response to DNA damage. The polypeptide is Neuronal vesicle trafficking-associated protein 1 (Rattus norvegicus (Rat)).